A 47-amino-acid polypeptide reads, in one-letter code: uncharacterized protein (47 aa).

The helical transmembrane segment at 28 to 45 (VMIWGCLPYFLYVLIRMF) threads the bilayer.

It localises to the cell membrane. This is an uncharacterized protein from Bacillus subtilis (strain 168).